The chain runs to 435 residues: MEEKDQRQRNIEHFKIKKLMTRLRNTRGSGTSMVSLIIPPKKQINDSTKLISDEFSKATNIKDRVNRQSVQDAMVSALQRLKLYQRTPNNGLILYCGKVLNEEGKEIKLLIDFEPYKPINTSLYFCDSKFHVDELGSLLETDPPFGFIVMDGQGALYANLQGNTKTVLNKFSVELPKKHGRGGQSSVRFARLRVEKRHNYLRKVCEVATQTFISQDKINVQGLVLAGSGDFKNELSTTQMFDPRLACKIIKIVDVSYGGENGLNQAIELAQESLTNVKFVQEKNVISKFFDCIAIDSGTVVYGVQDTMQLLLDGVIENILCFEELTTLRVTRKNKVTEQITHIFIPPNELNNPKHFKDGEHELEKIEVENLTEWLAEHYSEFGAELYFITDKSAEGCQFVKGFSGIGGFLRYKVDLEHIVNPNDEYNYEEEEGFI.

It belongs to the eukaryotic release factor 1 family. Heterodimer of two subunits, one of which binds GTP.

The protein resides in the cytoplasm. Functionally, directs the termination of nascent peptide synthesis (translation) in response to the termination codon UGA. In T.thermophila UAA and UAG codes for glutamine. This chain is Eukaryotic peptide chain release factor subunit 1 (ERF1), found in Tetrahymena thermophila.